Reading from the N-terminus, the 440-residue chain is VGFKAGVKDYRLTYYTPDYPTKDTDILAAFRMTPQPGVPPEEAGAAVAAESSTGTWTTVWTDGLTSLDRYKGRCYDIEPVSGEDKQYIAYLAYPLDLFEEGSVTNLFTSIVGNVFGFKALRALRLEDLRIPPAYSKTFIGPPHGIQVERDKLNKYGRPLLGCTIKPKLGLSAKNYGRAVYECLRGGLDFTKDDENVNSQPFMRWRDRFLFVAEALFKAQAETGEIKGHYLNATAGTCEEMMKRAVFARELGAPIVMHDYLTGGFTANTSLAFYCRDNGLLLHIHRAMHAVIDRQRNHGIHFRVLAKALRMSGGDHIHAGTVVGKLEGEREVTLGFVDLLRDDYIEKDRSRGIYFTQDWVSMPGVLPVASGGIHVWHMPALTEIFGDDSVLQFGGGTLGHPWGNAPGAVANRVASEACVQARNEGRDLAREGNEIIREACK.

The residue at position 4 (lysine 4) is an N6,N6,N6-trimethyllysine. Residues asparagine 113 and threonine 163 each coordinate substrate. The Proton acceptor role is filled by lysine 165. Position 167 (lysine 167) interacts with substrate. Residues lysine 191, aspartate 193, and glutamate 194 each coordinate Mg(2+). At lysine 191 the chain carries N6-carboxylysine. The active-site Proton acceptor is the histidine 284. Substrate is bound by residues arginine 285, histidine 317, and serine 369.

It belongs to the RuBisCO large chain family. Type I subfamily. As to quaternary structure, heterohexadecamer of 8 large chains and 8 small chains; disulfide-linked. The disulfide link is formed within the large subunit homodimers. Mg(2+) serves as cofactor. In terms of processing, the disulfide bond which can form in the large chain dimeric partners within the hexadecamer appears to be associated with oxidative stress and protein turnover.

The protein resides in the plastid. Its subcellular location is the chloroplast. The enzyme catalyses 2 (2R)-3-phosphoglycerate + 2 H(+) = D-ribulose 1,5-bisphosphate + CO2 + H2O. It catalyses the reaction D-ribulose 1,5-bisphosphate + O2 = 2-phosphoglycolate + (2R)-3-phosphoglycerate + 2 H(+). Its function is as follows. RuBisCO catalyzes two reactions: the carboxylation of D-ribulose 1,5-bisphosphate, the primary event in carbon dioxide fixation, as well as the oxidative fragmentation of the pentose substrate in the photorespiration process. Both reactions occur simultaneously and in competition at the same active site. The chain is Ribulose bisphosphate carboxylase large chain from Dicksonia antarctica (Australian tree fern).